The following is a 464-amino-acid chain: Forkhead box protein N3 (464 aa).

Disordered stretches follow at residues 1–53 (MGPI…EKGG) and 85–108 (PVQD…DAKQ). Residues 14 to 30 (TGISVSSQCYRSSTLSN) show a composition bias toward polar residues. Positions 113–209 (KPPYSFSCLI…QALKKTPYHP (97 aa)) form a DNA-binding region, fork-head. Disordered regions lie at residues 294–337 (MESE…SSSA) and 381–428 (LVES…MKEA). Positions 316–336 (SSAKSANKRSSSPSDSISSSS) are enriched in low complexity. Positions 389–401 (QHKKKQHLLKLRR) are enriched in basic residues.

It localises to the nucleus. Functionally, acts as a transcriptional repressor. May be involved in DNA damage-inducible cell cycle arrests (checkpoints). In Xenopus tropicalis (Western clawed frog), this protein is Forkhead box protein N3.